The primary structure comprises 260 residues: uncharacterized protein (260 aa).

Positions 1-22 (MGNIKSFALYISILLLIVVVAG) are cleaved as a signal peptide. C23 carries the N-palmitoyl cysteine lipid modification. C23 carries S-diacylglycerol cysteine lipidation.

The protein belongs to the staphylococcal tandem lipoprotein family.

The protein resides in the cell membrane. This is an uncharacterized protein from Staphylococcus aureus (strain MRSA252).